The primary structure comprises 202 residues: Adenylyl-sulfate kinase (202 aa).

31-38 (GLSASGKS) lines the ATP pocket. Ser105 (phosphoserine intermediate) is an active-site residue.

This sequence belongs to the APS kinase family.

It carries out the reaction adenosine 5'-phosphosulfate + ATP = 3'-phosphoadenylyl sulfate + ADP + H(+). It functions in the pathway sulfur metabolism; hydrogen sulfide biosynthesis; sulfite from sulfate: step 2/3. Catalyzes the synthesis of activated sulfate. This Saccharomyces bayanus (Yeast) protein is Adenylyl-sulfate kinase (MET14).